The primary structure comprises 443 residues: Amino-acid acetyltransferase (443 aa).

The N-acetyltransferase domain occupies E296 to S435.

Belongs to the acetyltransferase family. ArgA subfamily. Homohexamer.

The protein localises to the cytoplasm. The catalysed reaction is L-glutamate + acetyl-CoA = N-acetyl-L-glutamate + CoA + H(+). It participates in amino-acid biosynthesis; L-arginine biosynthesis; N(2)-acetyl-L-ornithine from L-glutamate: step 1/4. The polypeptide is Amino-acid acetyltransferase (Enterobacter sp. (strain 638)).